A 332-amino-acid chain; its full sequence is 2,3-diketo-L-gulonate reductase (332 aa).

The Proton donor role is filled by histidine 44. NAD(+) contacts are provided by residues 168-174 (ITMIDMS), 224-225 (WK), and 304-306 (GHE).

The protein belongs to the LDH2/MDH2 oxidoreductase family. DlgD subfamily. In terms of assembly, homodimer.

The protein resides in the cytoplasm. The catalysed reaction is 3-dehydro-L-gulonate + NAD(+) = 2,3-dioxo-L-gulonate + NADH + H(+). It catalyses the reaction 3-dehydro-L-gulonate + NADP(+) = 2,3-dioxo-L-gulonate + NADPH + H(+). Catalyzes the reduction of 2,3-diketo-L-gulonate in the presence of NADH, to form 3-keto-L-gulonate. The sequence is that of 2,3-diketo-L-gulonate reductase from Citrobacter koseri (strain ATCC BAA-895 / CDC 4225-83 / SGSC4696).